Consider the following 271-residue polypeptide: N-acetylaspartate synthetase (271 aa).

The segment at 1–38 is disordered; it reads MTYRGTRKSPCCSPPPRCGPPLPSGPAGSALGPPSSGA. The span at 12–24 shows a compositional bias: pro residues; it reads CSPPPRCGPPLPS. Residues 25 to 37 show a composition bias toward low complexity; it reads GPAGSALGPPSSG. The helical transmembrane segment at 89 to 109 threads the bilayer; that stretch reads VYAVIIIMCFVVTKSLLVTCC. In terms of domain architecture, N-acetyltransferase spans 115–258; sequence LGMRYYYSRK…HSLLERLFFQ (144 aa).

Belongs to the NAT8 family.

Its subcellular location is the cytoplasm. It localises to the microsome membrane. The protein resides in the mitochondrion membrane. The protein localises to the endoplasmic reticulum membrane. It catalyses the reaction L-aspartate + acetyl-CoA = N-acetyl-L-aspartate + CoA + H(+). Its function is as follows. Catalyzes the synthesis of N-acetylaspartate acid (NAA) from L-aspartate and acetyl-CoA. The protein is N-acetylaspartate synthetase (nat8l) of Xenopus tropicalis (Western clawed frog).